A 412-amino-acid chain; its full sequence is Putative competence-damage inducible protein (412 aa).

This sequence belongs to the CinA family.

The polypeptide is Putative competence-damage inducible protein (Bacillus cytotoxicus (strain DSM 22905 / CIP 110041 / 391-98 / NVH 391-98)).